The primary structure comprises 387 residues: uncharacterized protein (387 aa).

A helical transmembrane segment spans residues 5–25; sequence FVLFSFPFLLLSSMLIFYQTT.

The protein belongs to the LicD transferase family.

Its subcellular location is the membrane. This is an uncharacterized protein from Caenorhabditis elegans.